The sequence spans 226 residues: Peroxynitrite isomerase (226 aa).

A GXWXGXG motif is present at residues 21 to 27; it reads GSWEGQG. A heme b-binding site is contributed by His-191. The segment at 201 to 226 is disordered; the sequence is SAAEGRLAPGAERPRGAGGRKQGEQS.

This sequence belongs to the nitrobindin family. As to quaternary structure, homodimer. Heme b serves as cofactor.

The enzyme catalyses peroxynitrite = nitrate. It functions in the pathway nitrogen metabolism. In terms of biological role, heme-binding protein able to scavenge peroxynitrite and to protect free L-tyrosine against peroxynitrite-mediated nitration, by acting as a peroxynitrite isomerase that converts peroxynitrite to nitrate. Therefore, this protein likely plays a role in peroxynitrite sensing and in the detoxification of reactive nitrogen and oxygen species (RNS and ROS, respectively). Is able to bind nitric oxide (NO) in vitro, but may act as a sensor of peroxynitrite levels in vivo. The sequence is that of Peroxynitrite isomerase from Micrococcus luteus (strain ATCC 4698 / DSM 20030 / JCM 1464 / CCM 169 / CCUG 5858 / IAM 1056 / NBRC 3333 / NCIMB 9278 / NCTC 2665 / VKM Ac-2230) (Micrococcus lysodeikticus).